The following is a 153-amino-acid chain: Putative pre-16S rRNA nuclease (153 aa).

Belongs to the YqgF nuclease family.

The protein resides in the cytoplasm. Functionally, could be a nuclease involved in processing of the 5'-end of pre-16S rRNA. The chain is Putative pre-16S rRNA nuclease from Prochlorococcus marinus (strain SARG / CCMP1375 / SS120).